Here is a 104-residue protein sequence, read N- to C-terminus: UPF0145 protein HCH_01985 (104 aa).

This sequence belongs to the UPF0145 family.

The protein is UPF0145 protein HCH_01985 of Hahella chejuensis (strain KCTC 2396).